Consider the following 201-residue polypeptide: ATP-dependent Clp protease proteolytic subunit (201 aa).

Residue Ser-98 is the Nucleophile of the active site. His-123 is a catalytic residue.

It belongs to the peptidase S14 family. Fourteen ClpP subunits assemble into 2 heptameric rings which stack back to back to give a disk-like structure with a central cavity, resembling the structure of eukaryotic proteasomes.

It is found in the cytoplasm. It carries out the reaction Hydrolysis of proteins to small peptides in the presence of ATP and magnesium. alpha-casein is the usual test substrate. In the absence of ATP, only oligopeptides shorter than five residues are hydrolyzed (such as succinyl-Leu-Tyr-|-NHMec, and Leu-Tyr-Leu-|-Tyr-Trp, in which cleavage of the -Tyr-|-Leu- and -Tyr-|-Trp bonds also occurs).. In terms of biological role, cleaves peptides in various proteins in a process that requires ATP hydrolysis. Has a chymotrypsin-like activity. Plays a major role in the degradation of misfolded proteins. The polypeptide is ATP-dependent Clp protease proteolytic subunit (Rickettsia typhi (strain ATCC VR-144 / Wilmington)).